The sequence spans 398 residues: MAKEKYDRSKPHVNIGTIGHVDHGKTTLTAAITTVLARRLPSSVNQPKDYASIDAAPEERERGITINTAHVEYETEKRHYAHIDAPGHADYVKNMITGAAQMDGAILVVASTDGPMPQTREHILLSRQVGVKHLIVFMNKVDLVDDEELLELVEMEIRDLLSEYDFPGDDLPVIQGSALKALEGDSKYEDIVMELMNTVDEYIPEPERDTDKPLLLPVEDVFSITGRGTVASGRIDRGIVKVNDEIEIVGIKEETQKAVVTGVEMFRKQLDEGLAGDNVGVLLRGVQRDEIERGQVIAKPGSINPHTKFKGEVYILTKEEGGRHTPFFNNYRPQFYFRTTDVTGSIELPAGTEMVMPGDNVTIDVELIHPIAVEQGTTFSIREGGRTVGSGMVTEIEA.

One can recognise a tr-type G domain in the interval 10 to 207 (KPHVNIGTIG…TVDEYIPEPE (198 aa)). Residues 19–26 (GHVDHGKT) form a G1 region. Residue 19 to 26 (GHVDHGKT) coordinates GTP. A Mg(2+)-binding site is contributed by threonine 26. The G2 stretch occupies residues 63-67 (GITIN). The segment at 84-87 (DAPG) is G3. GTP-binding positions include 84-88 (DAPGH) and 139-142 (NKVD). Residues 139 to 142 (NKVD) are G4. A G5 region spans residues 177 to 179 (SAL).

The protein belongs to the TRAFAC class translation factor GTPase superfamily. Classic translation factor GTPase family. EF-Tu/EF-1A subfamily. In terms of assembly, monomer.

The protein resides in the cytoplasm. It carries out the reaction GTP + H2O = GDP + phosphate + H(+). Functionally, GTP hydrolase that promotes the GTP-dependent binding of aminoacyl-tRNA to the A-site of ribosomes during protein biosynthesis. The protein is Elongation factor Tu of Streptococcus pneumoniae serotype 4 (strain ATCC BAA-334 / TIGR4).